We begin with the raw amino-acid sequence, 258 residues long: Terpene cyclase macJ (258 aa).

The next 7 helical transmembrane spans lie at 29–49 (VPDGFTAISGILWSISYILMA), 58–78 (YAMPLHCLCLNITWEAVYGFV), 83–103 (LLNQVVFAQWMIVDVVLFYAI), 124–144 (IIVVGCVICLWLHLAIAATFI), 151–171 (VVFMTAWPMQVLINFSSIAQL), 181–201 (SWGIWWTRMLGTIAAACCFFW), and 220–240 (FLLLGSIGSDMVYAAVYVYVQ).

Belongs to the paxB family.

The protein resides in the membrane. It functions in the pathway secondary metabolite biosynthesis; terpenoid biosynthesis. Its function is as follows. Terpene cyclase; part of the gene cluster that mediates the biosynthesis of macrophorins, isoprenoid epoxycyclohexenones containing cyclized drimane moieties. The first step of the pathway is the synthesis of 6-methylsalicylic acid (6-MSA) by the polyketide synthase macA. 6-MSA is then converted to m-cresol by the decarboxylase macB. The cytochrome P450 monooxygenase macC then catalyzes the oxidation of m-cresol to toluquinol. Epoxidation of toluquinol is then performed by the short chain dehydrogenase macD, with the help of macE, and a further prenylation by macG leads to 7-deacetoxyyanuthone A. The next step is the hydroxylation of C-22 of 7-deacetoxyyanuthone A by the cytochrome P450 monooxygenase macH to yield 22-deacetylyanuthone A. O-Mevalon transferase macI then attaches mevalon to the hydroxyl group of 22-deacetylyanuthone A to produce yanuthone E. The terpene cyclase macJ catalyzes the cyclization of 22-deacetylyanuthone A to macrophorin A. MacJ is also able to catalyze cyclization of yanuthone E and 7-deacetoxyyanuthone A to their corresponding macrophorins. The macJ products can be further modified by macH and macJ, as well as by the FAD-dependent monooxygenase macF, to produce additional macrophorins, including 4'-oxomacrophorin A, 4'-oxomacrophorin D and 4'-oxomacrophorin E. This is Terpene cyclase macJ from Penicillium terrestre.